The sequence spans 1147 residues: Myosin light chain kinase, smooth muscle (1147 aa).

Positions 1–41 are actin-binding; the sequence is MDFRANLQRQVKPKTVSEEERKVHSPQQVDFRSVLAKKGTP. Positions 1–330 are disordered; sequence MDFRANLQRQ…PPASPGTAPT (330 aa). The calmodulin-binding stretch occupies residues 26–41; it reads PQQVDFRSVLAKKGTP. Residues 43–55 show a composition bias toward pro residues; sequence TPVPEKAPPPKPA. A run of 2 repeats spans residues 100-111 and 112-123. Positions 100-288 are 16 X 12 AA tandem repeats; the sequence is SLKPVANAKP…KAVANAKPAE (189 aa). A 3; truncated repeat occupies 124-132; that stretch reads TLKPVANAE. Tandem repeats lie at residues 133–144, 145–156, 157–168, 169–180, 181–192, 193–204, 205–216, 217–228, 229–240, 241–252, 253–264, 265–276, and 277–288. Residues 292–692 form an actin-binding (calcium/calmodulin-insensitive) region; that stretch reads PAGKEELKKE…TVTVNTEQKV (401 aa). Basic and acidic residues predominate over residues 293-320; it reads AGKEELKKEVQNDVNCKREKAGAADNEK. Ig-like C2-type domains follow at residues 329–417 and 469–557; these read PTFK…CHVT and PQIP…VNLT. Cysteines 350 and 401 form a disulfide. 2 disordered regions span residues 424 to 476 and 644 to 678; these read SENA…QFPE and SEPS…KEPE. Residues 459-472 show a composition bias toward pro residues; it reads PKTPPKAATPPQIP. The Fibronectin type-III domain occupies 565 to 657; that stretch reads PAGTPCASDI…QESELTTVGE (93 aa). Positions 644–653 are enriched in polar residues; sequence SEPSQESELT. Residues 662–677 are compositionally biased toward acidic residues; that stretch reads PKDEVEEVSDDDEKEP. A Phosphoserine modification is found at serine 670. Phosphotyrosine; by ABL1 is present on tyrosine 681. In terms of domain architecture, Protein kinase spans 696–951; that stretch reads YDIEERLGSG…CTQCLQHPWL (256 aa). ATP is bound by residues 702–710 and lysine 725; that span reads LGSGKFGQV. Position 807 is a phosphotyrosine; by ABL1 (tyrosine 807). The active-site Proton acceptor is aspartate 817. Phosphotyrosine; by ABL1 is present on tyrosine 867. The calmodulin-binding stretch occupies residues 943 to 1006; sequence TQCLQHPWLM…SGLSGRKSST (64 aa). A phosphoserine mark is found at serine 991, serine 992, serine 1004, serine 1005, and serine 1008. Residues 999–1019 are disordered; the sequence is LSGRKSSTGSPTSPLTAERLE. A compositionally biased stretch (polar residues) spans 1002 to 1013; that stretch reads RKSSTGSPTSPL. At threonine 1010 the chain carries Phosphothreonine. Residue serine 1011 is modified to Phosphoserine. In terms of domain architecture, Ig-like C2-type 3 spans 1041–1130; the sequence is PYFSKTIRDL…GEATCTAELI (90 aa). The cysteines at positions 1062 and 1114 are disulfide-linked.

The protein belongs to the protein kinase superfamily. CAMK Ser/Thr protein kinase family. As to quaternary structure, all isoforms including Telokin bind calmodulin. Interacts with SVIL. Interacts with CTTN; this interaction is reduced during thrombin-induced endothelial cell (EC) contraction but is promoted by the barrier-protective agonist sphingosine 1-phosphate (S1P) within lamellipodia. A complex made of ABL1, CTTN and MYLK regulates cortical actin-based cytoskeletal rearrangement critical to sphingosine 1-phosphate (S1P)-mediated endothelial cell (EC) barrier enhancement. Binds to NAA10/ARD1 and PTK2B/PYK2. The cofactor is Mg(2+). Ca(2+) serves as cofactor. The C-terminus is deglutamylated by AGTPBP1/CCP1, AGBL1/CCP4 and AGBL4/CCP6, leading to the formation of Myosin light chain kinase, smooth muscle, deglutamylated form. The consequences of C-terminal deglutamylation are unknown. In terms of processing, can probably be down-regulated by phosphorylation. Tyrosine phosphorylation by ABL1 increases kinase activity, reverses MLCK-mediated inhibition of Arp2/3-mediated actin polymerization, and enhances CTTN-binding. Phosphorylation by SRC promotes CTTN binding. In terms of tissue distribution, isoform Telokin is found in all smooth muscle tested except the aorta. It is not present in non-muscle tissue.

Its subcellular location is the cytoplasm. It localises to the cell projection. The protein resides in the lamellipodium. The protein localises to the cleavage furrow. It is found in the cytoskeleton. Its subcellular location is the stress fiber. The enzyme catalyses L-seryl-[myosin light chain] + ATP = O-phospho-L-seryl-[myosin light chain] + ADP + H(+). The catalysed reaction is L-threonyl-[myosin light chain] + ATP = O-phospho-L-threonyl-[myosin light chain] + ADP + H(+). Its activity is regulated as follows. All catalytically active isoforms require binding to calcium and calmodulin for activation. Calcium/calmodulin-dependent myosin light chain kinase implicated in smooth muscle contraction via phosphorylation of myosin light chains (MLC). Also regulates actin-myosin interaction through a non-kinase activity. Phosphorylates PTK2B/PYK2 and myosin light-chains. Involved in the inflammatory response (e.g. apoptosis, vascular permeability, leukocyte diapedesis), cell motility and morphology, airway hyperreactivity and other activities relevant to asthma. Required for tonic airway smooth muscle contraction that is necessary for physiological and asthmatic airway resistance. Necessary for gastrointestinal motility. Implicated in the regulation of endothelial as well as vascular permeability, probably via the regulation of cytoskeletal rearrangements. In the nervous system it has been shown to control the growth initiation of astrocytic processes in culture and to participate in transmitter release at synapses formed between cultured sympathetic ganglion cells. Critical participant in signaling sequences that result in fibroblast apoptosis. Plays a role in the regulation of epithelial cell survival. Required for epithelial wound healing, especially during actomyosin ring contraction during purse-string wound closure. Mediates RhoA-dependent membrane blebbing. Triggers TRPC5 channel activity in a calcium-dependent signaling, by inducing its subcellular localization at the plasma membrane. Promotes cell migration (including tumor cells) and tumor metastasis. PTK2B/PYK2 activation by phosphorylation mediates ITGB2 activation and is thus essential to trigger neutrophil transmigration during acute lung injury (ALI). May regulate optic nerve head astrocyte migration. Probably involved in mitotic cytoskeletal regulation. Regulates tight junction probably by modulating ZO-1 exchange in the perijunctional actomyosin ring. Mediates burn-induced microvascular barrier injury; triggers endothelial contraction in the development of microvascular hyperpermeability by phosphorylating MLC. Essential for intestinal barrier dysfunction. Mediates Giardia spp.-mediated reduced epithelial barrier function during giardiasis intestinal infection via reorganization of cytoskeletal F-actin and tight junctional ZO-1. Necessary for hypotonicity-induced Ca(2+) entry and subsequent activation of volume-sensitive organic osmolyte/anion channels (VSOAC) in cervical cancer cells. The chain is Myosin light chain kinase, smooth muscle (MYLK) from Oryctolagus cuniculus (Rabbit).